We begin with the raw amino-acid sequence, 378 residues long: D-alanine--D-alanine ligase (378 aa).

The ATP-grasp domain occupies 149–374; sequence KVLLRAAGIP…FRTVVTDLIE (226 aa). 189 to 247 is a binding site for ATP; sequence EAGLQYPLFVKPSRAGSSFGVTKVEQIGDAAALAAAVFEASRHDWRVLVEQGIDAREIE. Residues Asp-328, Glu-341, and Asn-343 each coordinate Mg(2+).

It belongs to the D-alanine--D-alanine ligase family. The cofactor is Mg(2+). Mn(2+) is required as a cofactor.

The protein resides in the cytoplasm. The enzyme catalyses 2 D-alanine + ATP = D-alanyl-D-alanine + ADP + phosphate + H(+). It participates in cell wall biogenesis; peptidoglycan biosynthesis. Its function is as follows. Cell wall formation. This Bifidobacterium animalis subsp. lactis (strain AD011) protein is D-alanine--D-alanine ligase.